Consider the following 171-residue polypeptide: MKKLSGVLAGSLLLISASFSQDLKAHAELINTEGEVIGKAELIETNSGVLIKLNAKGLPPNAELAFHIHERGECKPPTFKSAKGHFNPYGKKHGLLNPEGPHAGDMPNIYTDDKGNVRVQVLNPFVTLKKGEKNSLFKEGGTALVIHSGPDDYKSDPAGNAGKRIACGVIR.

An N-terminal signal peptide occupies residues 1-20 (MKKLSGVLAGSLLLISASFS). Residues His67, His69, and His85 each contribute to the Cu cation site. Cys74 and Cys167 are disulfide-bonded. Residues His85, His93, His102, and Asp105 each coordinate Zn(2+). A Cu cation-binding site is contributed by His147.

The protein belongs to the Cu-Zn superoxide dismutase family. The cofactor is Cu cation. Requires Zn(2+) as cofactor.

The catalysed reaction is 2 superoxide + 2 H(+) = H2O2 + O2. Its function is as follows. Destroys radicals which are normally produced within the cells and which are toxic to biological systems. The polypeptide is Superoxide dismutase [Cu-Zn] 2 (sodC2) (Aquifex aeolicus (strain VF5)).